The primary structure comprises 170 residues: Cyclic pyranopterin monophosphate synthase (170 aa).

Residues 75 to 77 (LCH) and 113 to 114 (ME) each bind substrate. D128 is a catalytic residue.

It belongs to the MoaC family. As to quaternary structure, homohexamer; trimer of dimers.

The catalysed reaction is (8S)-3',8-cyclo-7,8-dihydroguanosine 5'-triphosphate = cyclic pyranopterin phosphate + diphosphate. It participates in cofactor biosynthesis; molybdopterin biosynthesis. In terms of biological role, catalyzes the conversion of (8S)-3',8-cyclo-7,8-dihydroguanosine 5'-triphosphate to cyclic pyranopterin monophosphate (cPMP). The sequence is that of Cyclic pyranopterin monophosphate synthase from Pelotomaculum thermopropionicum (strain DSM 13744 / JCM 10971 / SI).